Reading from the N-terminus, the 212-residue chain is Ras-related protein RABC1 (212 aa).

Gly-2 carries the N-acetylglycine modification. Gly-20 to Ser-27 is a GTP binding site. The Effector region signature appears at Leu-41–Phe-49. Residues Asp-67 to Gln-71, Asn-127 to Asp-130, and Ser-157 to Ala-158 each bind GTP. Residues Thr-182 to Ser-212 form a disordered region. Positions Thr-201–Ser-212 are enriched in low complexity. S-geranylgeranyl cysteine attachment occurs at residues Cys-209 and Cys-210.

Belongs to the small GTPase superfamily. Rab family.

Its subcellular location is the cell membrane. Its function is as follows. Intracellular vesicle trafficking and protein transport. This is Ras-related protein RABC1 (RABC1) from Arabidopsis thaliana (Mouse-ear cress).